Here is a 486-residue protein sequence, read N- to C-terminus: Histidine--tRNA ligase, chloroplastic/mitochondrial (486 aa).

It belongs to the class-II aminoacyl-tRNA synthetase family.

It localises to the plastid. Its subcellular location is the chloroplast. The protein localises to the mitochondrion. The catalysed reaction is tRNA(His) + L-histidine + ATP = L-histidyl-tRNA(His) + AMP + diphosphate + H(+). This is Histidine--tRNA ligase, chloroplastic/mitochondrial from Arabidopsis thaliana (Mouse-ear cress).